Reading from the N-terminus, the 439-residue chain is Perilipin-3 (439 aa).

Positions methionine 1–glutamate 19 are enriched in low complexity. The disordered stretch occupies residues methionine 1–valine 26. Residue lysine 66 is modified to N6-acetyllysine. A Phosphoserine modification is found at serine 92. Lysine 123 participates in a covalent cross-link: Glycyl lysine isopeptide (Lys-Gly) (interchain with G-Cter in SUMO1). Serine 131 bears the Phosphoserine mark. Threonine 175 is subject to Phosphothreonine. A phosphoserine mark is found at serine 180 and serine 184. Residue threonine 221 is modified to Phosphothreonine. Phosphoserine is present on residues serine 222 and serine 246. Coiled-coil stretches lie at residues arginine 254 to serine 282 and alanine 358 to methionine 381. A Phosphotyrosine modification is found at tyrosine 256.

It belongs to the perilipin family. As to quaternary structure, homooligomer. Interacts with M6PR (via the cytoplasmic domain). Interacts with IGF2R (via the cytoplasmic domain). Post-translationally, phosphorylation at Tyr-256 by isoform 1 of CHKA (CHKalpha2) promotes dissociation from lipid droplets: dissociation is followed by recruitment of autophagosome machinery to lipid droplets and subsequent lipid droplet lipolysis.

The protein resides in the lipid droplet. It localises to the endosome membrane. Its subcellular location is the cytoplasm. Functionally, structural component of lipid droplets, which is required for the formation and maintenance of lipid storage droplets. Required for the transport of mannose 6-phosphate receptors (MPR) from endosomes to the trans-Golgi network. The chain is Perilipin-3 (PLIN3) from Sus scrofa (Pig).